A 191-amino-acid chain; its full sequence is Fe/S biogenesis protein NfuA (191 aa).

Cysteine 149 and cysteine 152 together coordinate [4Fe-4S] cluster.

Belongs to the NfuA family. Homodimer. It depends on [4Fe-4S] cluster as a cofactor.

Functionally, involved in iron-sulfur cluster biogenesis. Binds a 4Fe-4S cluster, can transfer this cluster to apoproteins, and thereby intervenes in the maturation of Fe/S proteins. Could also act as a scaffold/chaperone for damaged Fe/S proteins. The polypeptide is Fe/S biogenesis protein NfuA (Klebsiella pneumoniae (strain 342)).